The following is a 20-amino-acid chain: Short cationic peptide-4a (20 aa).

Glutamic acid 1-amide is present on glutamate 20.

As to expression, expressed by the venom gland.

The protein localises to the secreted. The polypeptide is Short cationic peptide-4a (Cupiennius salei (American wandering spider)).